Here is a 208-residue protein sequence, read N- to C-terminus: ATP-dependent Clp protease proteolytic subunit (208 aa).

Serine 98 acts as the Nucleophile in catalysis. Histidine 123 is a catalytic residue.

It belongs to the peptidase S14 family. In terms of assembly, fourteen ClpP subunits assemble into 2 heptameric rings which stack back to back to give a disk-like structure with a central cavity, resembling the structure of eukaryotic proteasomes.

The protein resides in the cytoplasm. It carries out the reaction Hydrolysis of proteins to small peptides in the presence of ATP and magnesium. alpha-casein is the usual test substrate. In the absence of ATP, only oligopeptides shorter than five residues are hydrolyzed (such as succinyl-Leu-Tyr-|-NHMec, and Leu-Tyr-Leu-|-Tyr-Trp, in which cleavage of the -Tyr-|-Leu- and -Tyr-|-Trp bonds also occurs).. Its function is as follows. Cleaves peptides in various proteins in a process that requires ATP hydrolysis. Has a chymotrypsin-like activity. Plays a major role in the degradation of misfolded proteins. The chain is ATP-dependent Clp protease proteolytic subunit from Wolbachia pipientis subsp. Culex pipiens (strain wPip).